Consider the following 139-residue polypeptide: Transcription antitermination protein NusB (139 aa).

The protein belongs to the NusB family.

In terms of biological role, involved in transcription antitermination. Required for transcription of ribosomal RNA (rRNA) genes. Binds specifically to the boxA antiterminator sequence of the ribosomal RNA (rrn) operons. The chain is Transcription antitermination protein NusB from Klebsiella pneumoniae (strain 342).